Reading from the N-terminus, the 156-residue chain is Ribonuclease pancreatic (156 aa).

An N-terminal signal peptide occupies residues 1-28 (MALEKSLVLLPLLVLILLVLGWVQPSLG). Residues Lys-35 and Arg-38 each contribute to the substrate site. Residue His-40 is the Proton acceptor of the active site. N-linked (GlcNAc...) asparagine glycans are attached at residues Asn-50 and Asn-62. 4 cysteine pairs are disulfide-bonded: Cys-54–Cys-112, Cys-68–Cys-123, Cys-86–Cys-138, and Cys-93–Cys-100. Substrate-binding positions include 69 to 73 (KPVNT) and Lys-94. Asn-104 is a glycosylation site (N-linked (GlcNAc...) asparagine). A substrate-binding site is contributed by Arg-113. His-147 (proton donor) is an active-site residue.

Belongs to the pancreatic ribonuclease family. Monomer. Interacts with and forms tight 1:1 complexes with RNH1. Dimerization of two such complexes may occur. Interaction with RNH1 inhibits this protein. As to expression, pancreas and other tissues and body fluids (indicating it may have other physiological functions besides its role in digestion).

It is found in the secreted. The catalysed reaction is an [RNA] containing cytidine + H2O = an [RNA]-3'-cytidine-3'-phosphate + a 5'-hydroxy-ribonucleotide-3'-[RNA].. The enzyme catalyses an [RNA] containing uridine + H2O = an [RNA]-3'-uridine-3'-phosphate + a 5'-hydroxy-ribonucleotide-3'-[RNA].. In terms of biological role, endonuclease that catalyzes the cleavage of RNA on the 3' side of pyrimidine nucleotides. Acts on single-stranded and double-stranded RNA. The polypeptide is Ribonuclease pancreatic (RNASE1) (Pongo pygmaeus (Bornean orangutan)).